The chain runs to 239 residues: Mitochondrial fission factor homolog B (239 aa).

Topologically, residues 1 to 219 (MAEINRMQYE…ENKERVKHEM (219 aa)) are cytoplasmic. Positions 107–139 (EGPAPATPHSKEVRSSGHLKRDGLASENSLRQN) are disordered. The segment covering 115–130 (HSKEVRSSGHLKRDGL) has biased composition (basic and acidic residues). The stretch at 184 to 214 (DLALADAASLRRQIIKLNRRLLLLEEENKER) forms a coiled coil. A helical; Anchor for type IV membrane protein membrane pass occupies residues 220–237 (TMYSIIIIFGLLNSWLWF). Residues 238–239 (RR) are Extracellular-facing.

It belongs to the Tango11 family.

The protein localises to the mitochondrion outer membrane. The protein resides in the peroxisome. Its function is as follows. Plays a role in mitochondrial and peroxisomal fission. Promotes the recruitment and association of the fission mediator dynamin-related protein 1 (DNM1L) to the mitochondrial surface. This chain is Mitochondrial fission factor homolog B (mff-b), found in Xenopus laevis (African clawed frog).